The sequence spans 942 residues: Sucrose synthase 6 (942 aa).

The GT-B glycosyltransferase stretch occupies residues 281-759 (TVFNVVIFSV…GLKRIYECYT (479 aa)). The interval 830-862 (TTNLGAGSKQKEVTETEKTKQKSKDGQEQHDVK) is disordered. Residues 838-862 (KQKEVTETEKTKQKSKDGQEQHDVK) show a composition bias toward basic and acidic residues.

This sequence belongs to the glycosyltransferase 1 family. Plant sucrose synthase subfamily. As to expression, detected in the whole plant but more precisely confined to the vasculature in cotyledons, leaves, petals, anthers and roots.

The protein resides in the secreted. It is found in the cell wall. It carries out the reaction an NDP-alpha-D-glucose + D-fructose = a ribonucleoside 5'-diphosphate + sucrose + H(+). In terms of biological role, sucrose-cleaving enzyme that provides UDP-glucose and fructose for various metabolic pathways. Functions in callose synthesis at the site of phloem sieve elements. The protein is Sucrose synthase 6 (SUS6) of Arabidopsis thaliana (Mouse-ear cress).